The primary structure comprises 241 residues: Orotidine 5'-phosphate decarboxylase (241 aa).

Residues D15, K36, 63-72 (DLKFHDIPNT), T127, R189, Q198, G218, and R219 each bind substrate. K65 functions as the Proton donor in the catalytic mechanism.

The protein belongs to the OMP decarboxylase family. Type 1 subfamily. Homodimer.

The catalysed reaction is orotidine 5'-phosphate + H(+) = UMP + CO2. It functions in the pathway pyrimidine metabolism; UMP biosynthesis via de novo pathway; UMP from orotate: step 2/2. Functionally, catalyzes the decarboxylation of orotidine 5'-monophosphate (OMP) to uridine 5'-monophosphate (UMP). This Prochlorococcus marinus (strain MIT 9211) protein is Orotidine 5'-phosphate decarboxylase.